The primary structure comprises 131 residues: Heterochromatin silencing protein rss1 (131 aa).

Monomer.

Its subcellular location is the cytoplasm. It is found in the nucleus. Its function is as follows. Required for heterochromatin silencing within pericentromeric repeats and at telomers. Facilitates the recruitment of Clr6 histone deacetylase (HDAC) by interacting with histones. Also interacts with Rad25, which mediates heterochromatin silencing in DNA repeats by recruiting the RITS complex. Together with Rad25, forms a regulatory hub that defines heterochromatin silencing within tandem repeats via linking RNAi and HDAC. The protein is Heterochromatin silencing protein rss1 (rss1) of Schizosaccharomyces pombe (strain 972 / ATCC 24843) (Fission yeast).